Consider the following 148-residue polypeptide: Multiprotein-bridging factor 1c (148 aa).

An HTH cro/C1-type domain is found at 91–145 (IQKARLEKKMSQADLAKQINERTQVVQEYENGKAVPNQAVLAKMEKVLGVKLRGK). The H-T-H motif DNA-binding region spans 102 to 121 (QADLAKQINERTQVVQEYEN).

The protein belongs to the MBF1 family. In terms of assembly, binds to TPS5. As to expression, expressed in leaves, roots, stems, flowers, siliques and shoots. Not detected in seeds.

The protein localises to the nucleus. The protein resides in the nucleolus. It localises to the cytoplasm. In terms of biological role, transcriptional coactivator that stimulates transcriptional activity by bridging regulatory proteins and TBP, thereby recruiting TBP to promoters occupied by DNA-binding regulators. Involved in the tolerance to heat and osmotic stress by partially activating the ethylene-response signal transduction pathway. The polypeptide is Multiprotein-bridging factor 1c (MBF1C) (Arabidopsis thaliana (Mouse-ear cress)).